Consider the following 375-residue polypeptide: MSCPVIELAQQLIRRPSLSPDDAGCQALMIERLRAIGFTVEPMDFGDTQNFWAWRGHGETLAFAGHTDVVPAGDADRWINPPFEPTIRDGMLFGRGAADMKGSLAAMVVAAERFVAQYPNHRGRLAFLITSDEEASAKNGTVKVVETLMARNERLDYCLVGEPSSTEVVGDVVKNGRRGSLTCNLTIHGVQGHVAYPHLADNPVHRAAPMLAELVNIEWDKGNEFFPPTSMQIANVQSGTGSNNVIPGDMFVQFNFRFSTELTDEMIKARVVSLLEKYQLRYSVEWWLSGQPFLTGRGKLVDAVVSAIEHYNEIKPQLLTNGGTSDGRFIARMGAQVVELGPVNATIHKINECVNAADLQLLARMYQRVMEQLVA.

His66 contributes to the Zn(2+) binding site. Asp68 is an active-site residue. Asp99 provides a ligand contact to Zn(2+). The active-site Proton acceptor is the Glu133. 3 residues coordinate Zn(2+): Glu134, Glu162, and His348.

The protein belongs to the peptidase M20A family. DapE subfamily. As to quaternary structure, homodimer. Zn(2+) is required as a cofactor. It depends on Co(2+) as a cofactor.

It carries out the reaction N-succinyl-(2S,6S)-2,6-diaminopimelate + H2O = (2S,6S)-2,6-diaminopimelate + succinate. It participates in amino-acid biosynthesis; L-lysine biosynthesis via DAP pathway; LL-2,6-diaminopimelate from (S)-tetrahydrodipicolinate (succinylase route): step 3/3. Its function is as follows. Catalyzes the hydrolysis of N-succinyl-L,L-diaminopimelic acid (SDAP), forming succinate and LL-2,6-diaminopimelate (DAP), an intermediate involved in the bacterial biosynthesis of lysine and meso-diaminopimelic acid, an essential component of bacterial cell walls. The sequence is that of Succinyl-diaminopimelate desuccinylase from Klebsiella pneumoniae (strain 342).